A 469-amino-acid chain; its full sequence is Light-independent protochlorophyllide reductase subunit N (469 aa).

C24, C49, and C109 together coordinate [4Fe-4S] cluster.

This sequence belongs to the BchN/ChlN family. In terms of assembly, protochlorophyllide reductase is composed of three subunits; ChlL, ChlN and ChlB. Forms a heterotetramer of two ChlB and two ChlN subunits. The cofactor is [4Fe-4S] cluster.

It catalyses the reaction chlorophyllide a + oxidized 2[4Fe-4S]-[ferredoxin] + 2 ADP + 2 phosphate = protochlorophyllide a + reduced 2[4Fe-4S]-[ferredoxin] + 2 ATP + 2 H2O. It functions in the pathway porphyrin-containing compound metabolism; chlorophyll biosynthesis (light-independent). Its function is as follows. Component of the dark-operative protochlorophyllide reductase (DPOR) that uses Mg-ATP and reduced ferredoxin to reduce ring D of protochlorophyllide (Pchlide) to form chlorophyllide a (Chlide). This reaction is light-independent. The NB-protein (ChlN-ChlB) is the catalytic component of the complex. This Synechocystis sp. (strain ATCC 27184 / PCC 6803 / Kazusa) protein is Light-independent protochlorophyllide reductase subunit N.